Consider the following 251-residue polypeptide: 3-deoxy-manno-octulosonate cytidylyltransferase (251 aa).

Belongs to the KdsB family.

Its subcellular location is the cytoplasm. It catalyses the reaction 3-deoxy-alpha-D-manno-oct-2-ulosonate + CTP = CMP-3-deoxy-beta-D-manno-octulosonate + diphosphate. Its pathway is nucleotide-sugar biosynthesis; CMP-3-deoxy-D-manno-octulosonate biosynthesis; CMP-3-deoxy-D-manno-octulosonate from 3-deoxy-D-manno-octulosonate and CTP: step 1/1. It participates in bacterial outer membrane biogenesis; lipopolysaccharide biosynthesis. Functionally, activates KDO (a required 8-carbon sugar) for incorporation into bacterial lipopolysaccharide in Gram-negative bacteria. This chain is 3-deoxy-manno-octulosonate cytidylyltransferase, found in Parabacteroides distasonis (strain ATCC 8503 / DSM 20701 / CIP 104284 / JCM 5825 / NCTC 11152).